Consider the following 169-residue polypeptide: Photosystem I assembly protein Ycf3 (169 aa).

3 TPR repeats span residues 35–68, 72–105, and 120–153; these read AFSY…EIDP, SYIL…NPAL, and GEQA…APSN.

It belongs to the Ycf3 family.

The protein resides in the plastid. It is found in the chloroplast thylakoid membrane. In terms of biological role, essential for the assembly of the photosystem I (PSI) complex. May act as a chaperone-like factor to guide the assembly of the PSI subunits. This Chaetosphaeridium globosum (Charophycean green alga) protein is Photosystem I assembly protein Ycf3.